Consider the following 324-residue polypeptide: Acetyl-coenzyme A carboxylase carboxyl transferase subunit alpha (324 aa).

Positions 37 to 291 constitute a CoA carboxyltransferase C-terminal domain; it reads KLEKRLDKLK…REFIIQEWLR (255 aa).

This sequence belongs to the AccA family. Acetyl-CoA carboxylase is a heterohexamer composed of biotin carboxyl carrier protein (AccB), biotin carboxylase (AccC) and two subunits each of ACCase subunit alpha (AccA) and ACCase subunit beta (AccD).

It is found in the cytoplasm. It catalyses the reaction N(6)-carboxybiotinyl-L-lysyl-[protein] + acetyl-CoA = N(6)-biotinyl-L-lysyl-[protein] + malonyl-CoA. The protein operates within lipid metabolism; malonyl-CoA biosynthesis; malonyl-CoA from acetyl-CoA: step 1/1. Component of the acetyl coenzyme A carboxylase (ACC) complex. First, biotin carboxylase catalyzes the carboxylation of biotin on its carrier protein (BCCP) and then the CO(2) group is transferred by the carboxyltransferase to acetyl-CoA to form malonyl-CoA. The protein is Acetyl-coenzyme A carboxylase carboxyl transferase subunit alpha of Chlamydia pneumoniae (Chlamydophila pneumoniae).